Consider the following 480-residue polypeptide: Membrane-bound lytic murein transglycosylase F (480 aa).

The N-terminal stretch at M1 to A15 is a signal peptide. The tract at residues S16–V259 is non-LT domain. The interval K260–Q480 is LT domain. E304 is a catalytic residue.

It in the N-terminal section; belongs to the bacterial solute-binding protein 3 family. In the C-terminal section; belongs to the transglycosylase Slt family.

Its subcellular location is the cell outer membrane. It carries out the reaction Exolytic cleavage of the (1-&gt;4)-beta-glycosidic linkage between N-acetylmuramic acid (MurNAc) and N-acetylglucosamine (GlcNAc) residues in peptidoglycan, from either the reducing or the non-reducing ends of the peptidoglycan chains, with concomitant formation of a 1,6-anhydrobond in the MurNAc residue.. Murein-degrading enzyme that degrades murein glycan strands and insoluble, high-molecular weight murein sacculi, with the concomitant formation of a 1,6-anhydromuramoyl product. Lytic transglycosylases (LTs) play an integral role in the metabolism of the peptidoglycan (PG) sacculus. Their lytic action creates space within the PG sacculus to allow for its expansion as well as for the insertion of various structures such as secretion systems and flagella. This chain is Membrane-bound lytic murein transglycosylase F, found in Shewanella sediminis (strain HAW-EB3).